Consider the following 115-residue polypeptide: UPF0102 protein NMCC_2054 (115 aa).

This sequence belongs to the UPF0102 family.

This Neisseria meningitidis serogroup C (strain 053442) protein is UPF0102 protein NMCC_2054.